The following is a 61-amino-acid chain: U-stichotoxin-Hcr1a (61 aa).

Residues 1-21 (MKPAIFLMLFVAMFLISEGEG) form the signal peptide. The propeptide occupies 22 to 31 (FKPKDAPQER). P36 bears the Hydroxyproline mark. 2 cysteine pairs are disulfide-bonded: C41–C53 and C44–C59.

It belongs to the Hau1a/HC18/HC19 family.

The protein resides in the secreted. It localises to the nematocyst. Toxin that is lethal to crab. Does not produce the typical symptoms associated with sodium channel toxins in crabs, suggesting that it likely does not act on sodium channels. The polypeptide is U-stichotoxin-Hcr1a (Radianthus crispa (Leathery sea anemone)).